The following is a 111-amino-acid chain: Photosystem II reaction center Psb28 protein (111 aa).

This sequence belongs to the Psb28 family. As to quaternary structure, part of the photosystem II complex.

The protein localises to the cellular thylakoid membrane. This is Photosystem II reaction center Psb28 protein from Acaryochloris marina (strain MBIC 11017).